The chain runs to 316 residues: NAC domain-containing protein 22 (316 aa).

Positions 17–170 (DLPGFRFHPT…DMVLCKIYRK (154 aa)) constitute an NAC domain. A DNA-binding region spans residues 117 to 176 (IGLKKTLVFYQGRAPRGTKTDWVMNEYRLPDYGAARAAAPPPKEDMVLCKIYRKATPLKE). The tract at residues 229-260 (QSSSSSAAPSGSSSKNGGAGAPREAKKEEADV) is disordered. The segment covering 230–244 (SSSSSAAPSGSSSKN) has biased composition (low complexity).

It is found in the nucleus. In terms of biological role, transcription activator that binds sequence-specific DNA motifs. Involved in stress response. Plays a positive role in drought and salt stress tolerance through the modulation of abscisic acid-mediated signaling. The protein is NAC domain-containing protein 22 of Oryza sativa subsp. japonica (Rice).